A 336-amino-acid chain; its full sequence is Filaggrin (336 aa).

The segment at 1–313 is disordered; it reads PDGSGRSSNR…GVQGAAASGQ (313 aa). Composition is skewed to low complexity over residues 16-26, 40-66, and 73-98; these read QLSPSQSSDSQ, SSSA…LAAD, and ARQG…SSSA. Composition is skewed to basic and acidic residues over residues 100 to 120, 163 to 176, and 184 to 195; these read RQGR…HSDF, DSQH…EQQR, and HQHEHEQPESGH. Low complexity predominate over residues 285-311; sequence AQRGQSSSANRRAGSSSGSGVQGAAAS.

Belongs to the S100-fused protein family. In terms of processing, filaggrin is initially synthesized as a large, insoluble, highly phosphorylated precursor containing many tandem copies of 248 AA, which are not separated by large linker sequences. During terminal differentiation it is dephosphorylated and proteolytically cleaved. As to expression, expressed in the granular layer of the epidermis (at protein level). Expressed in the epidermis of the ear (at protein level).

The protein resides in the cytoplasmic granule. Its function is as follows. Aggregates keratin intermediate filaments and promotes disulfide-bond formation among the intermediate filaments during terminal differentiation of mammalian epidermis. The sequence is that of Filaggrin (Flg) from Mus musculus (Mouse).